Consider the following 185-residue polypeptide: Male-enhanced antigen 1 (185 aa).

Disordered stretches follow at residues 1-90 (MGPE…VGDG) and 104-134 (GLHLPDPPLESEDEDEEGATALNNHSSIPMD). 2 stretches are compositionally biased toward acidic residues: residues 50-60 (SSEEPEEEQEE) and 112-121 (LESEDEDEEG). S114 bears the Phosphoserine mark.

As to expression, highly expressed in testis.

May play an important role in spermatogenesis and/or testis development. The polypeptide is Male-enhanced antigen 1 (MEA1) (Homo sapiens (Human)).